We begin with the raw amino-acid sequence, 85 residues long: Small ribosomal subunit protein uS17 (85 aa).

This sequence belongs to the universal ribosomal protein uS17 family. Part of the 30S ribosomal subunit.

One of the primary rRNA binding proteins, it binds specifically to the 5'-end of 16S ribosomal RNA. The sequence is that of Small ribosomal subunit protein uS17 from Anaeromyxobacter dehalogenans (strain 2CP-1 / ATCC BAA-258).